Reading from the N-terminus, the 241-residue chain is MPAARAAPAADEPMRDPVAPVRAPALPRPAPGAVAPASGGARAPGLAAPVEAMTEYKLVVVGARGVGKSALTIQLIQNHFVDEYDPTIEDSYRKQVVIDGETCLLDILDTTGQEEYSAMRDQYMRTGEGFLCVFAINNTKSFEDIHQYREQIKRVKDSDDVPMVLVGNKCDLAGRTVESRQAQDLARSYGIPYIETSAKTRQGVEDAFYTLVREIRQHKLRKLNPPDESGPGCMSCKCVLS.

Positions 1 to 41 (MPAARAAPAADEPMRDPVAPVRAPALPRPAPGAVAPASGGA) are disordered. Residues C233 and C236 are each lipidated (S-palmitoyl cysteine; by host). At C238 the chain carries Cysteine methyl ester; by host. The S-farnesyl cysteine; by host moiety is linked to residue C238. A propeptide spans 239-241 (VLS) (removed in mature form).

The protein belongs to the small GTPase superfamily. Ras family.

It localises to the host cell membrane. It catalyses the reaction GTP + H2O = GDP + phosphate + H(+). Alternates between an inactive form bound to GDP and an active form bound to GTP. Activated by a guanine nucleotide-exchange factor (GEF) and inactivated by a GTPase-activating protein (GAP). This Mus musculus (Mouse) protein is Transforming protein p29 (H-RAS).